The following is a 225-amino-acid chain: Riboflavin kinase (225 aa).

The unknown stretch occupies residues 1–89 (MPDIEYLKKL…SRIFSSEPDT (89 aa)). The segment at 90 to 225 (LELEGNVLKG…LKKQGMEGQK (136 aa)) is riboflavin kinase. CDP is bound at residue 99–104 (GLGEGQ). Mg(2+)-binding residues include T128 and N130. T185 and E193 together coordinate FMN. 198–201 (VKLR) contacts CDP.

The protein belongs to the archaeal riboflavin kinase family. Mg(2+) is required as a cofactor.

The enzyme catalyses riboflavin + CTP = CDP + FMN + H(+). Its pathway is cofactor biosynthesis; FMN biosynthesis; FMN from riboflavin (CTP route): step 1/1. Catalyzes the CTP-dependent phosphorylation of riboflavin (vitamin B2) to form flavin mononucleotide (FMN). The sequence is that of Riboflavin kinase (ribK) from Methanosarcina mazei (strain ATCC BAA-159 / DSM 3647 / Goe1 / Go1 / JCM 11833 / OCM 88) (Methanosarcina frisia).